Here is a 296-residue protein sequence, read N- to C-terminus: Elongation factor Ts (296 aa).

The segment at 79-82 (TDFV) is involved in Mg(2+) ion dislocation from EF-Tu.

It belongs to the EF-Ts family.

It localises to the cytoplasm. Its function is as follows. Associates with the EF-Tu.GDP complex and induces the exchange of GDP to GTP. It remains bound to the aminoacyl-tRNA.EF-Tu.GTP complex up to the GTP hydrolysis stage on the ribosome. This is Elongation factor Ts (tsf) from Spiroplasma citri.